Reading from the N-terminus, the 386-residue chain is MSALEKSMHLGRLPSRPPLPGSGGSQSGAKMRMGPGRKRDFTPVPWSQYFESMEDVEVENETGKDTFRVYKSGSEGPVLLLLHGGGHSALSWAVFTAAIISRVQCRIVALDLRSHGETKVKNSEDLSAETMAKDVGNVVEAMYGDLPPPVMLIGHSMGGAIAVHTAAANLVPSLLGLCMIDVVEGTAMDALNSMQNFLRGRPKTFKSLENAIEWSVKSGQIRNLESARVSMVGQVKQCEGITSPESSKSIVEGIIEEEEEDEEGSESVNKRKKEDDMETKKDHPYTWRIELAKTEKYWDGWFRGLSNLFLSCPIPKLLLLAGVDRLDKDLTIGQMQGKFQMQVLPQCGHAVHEDAPDKVAEAVATFLIRHRFAEPIGGFQCVFPGC.

The disordered stretch occupies residues 1 to 38 (MSALEKSMHLGRLPSRPPLPGSGGSQSGAKMRMGPGRK). S15 bears the Phosphoserine mark. Asymmetric dimethylarginine; alternate is present on R16. An Omega-N-methylarginine; alternate modification is found at R16. The active site involves S156. The segment covering 255-265 (IEEEEEDEEGS) has biased composition (acidic residues). A disordered region spans residues 255 to 280 (IEEEEEDEEGSESVNKRKKEDDMETK). The segment covering 268-280 (VNKRKKEDDMETK) has biased composition (basic and acidic residues). The active site involves H349.

Belongs to the AB hydrolase superfamily. As to quaternary structure, binds PPP2CA and PPP2CB. Phosphorylated by SIK1 following increases in intracellular sodium, leading to dissociation from the protein phosphatase 2A (PP2A) complex and subsequent dephosphorylation of sodium/potassium-transporting ATPase ATP1A1.

The catalysed reaction is [phosphatase 2A protein]-C-terminal L-leucine methyl ester + H2O = [phosphatase 2A protein]-C-terminal L-leucine + methanol + H(+). Its function is as follows. Demethylates proteins that have been reversibly carboxymethylated. Demethylates PPP2CB (in vitro) and PPP2CA. Binding to PPP2CA displaces the manganese ion and inactivates the enzyme. The protein is Protein phosphatase methylesterase 1 (Ppme1) of Rattus norvegicus (Rat).